The primary structure comprises 380 residues: Succinyl-diaminopimelate desuccinylase (380 aa).

Residue H66 participates in Zn(2+) binding. Residue D68 is part of the active site. Residue D99 coordinates Zn(2+). E135 serves as the catalytic Proton acceptor. Residues E136, E164, and H350 each contribute to the Zn(2+) site.

Belongs to the peptidase M20A family. DapE subfamily. As to quaternary structure, homodimer. It depends on Zn(2+) as a cofactor. Requires Co(2+) as cofactor.

It catalyses the reaction N-succinyl-(2S,6S)-2,6-diaminopimelate + H2O = (2S,6S)-2,6-diaminopimelate + succinate. It participates in amino-acid biosynthesis; L-lysine biosynthesis via DAP pathway; LL-2,6-diaminopimelate from (S)-tetrahydrodipicolinate (succinylase route): step 3/3. Catalyzes the hydrolysis of N-succinyl-L,L-diaminopimelic acid (SDAP), forming succinate and LL-2,6-diaminopimelate (DAP), an intermediate involved in the bacterial biosynthesis of lysine and meso-diaminopimelic acid, an essential component of bacterial cell walls. The polypeptide is Succinyl-diaminopimelate desuccinylase (Magnetococcus marinus (strain ATCC BAA-1437 / JCM 17883 / MC-1)).